The chain runs to 707 residues: Alpha-hemolysin translocation ATP-binding protein HlyB (707 aa).

The Peptidase C39 domain occupies 3–125 (SCHKIDYGLY…ALYQGHIILI (123 aa)). The active site involves His83. Residues 154–436 (FIETLVVSVF…LAQIWQDFQQ (283 aa)) form the ABC transmembrane type-1 domain. The next 5 helical transmembrane spans lie at 158–178 (LVVS…FQVV), 191–211 (LNVI…LSGL), 269–289 (ALTS…MWYY), 295–315 (LVIL…SPIL), and 388–408 (VMII…LSIG). Residues 468 to 703 (ITFRNIRFRY…PESLYSYLYQ (236 aa)) form the ABC transporter domain. 502–509 (GRSGSGKS) provides a ligand contact to ATP.

The protein belongs to the ABC transporter superfamily. Protein-1 exporter (TC 3.A.1.109) family. Homodimer.

It is found in the cell inner membrane. Its function is as follows. Part of the ABC transporter complex HlyBD involved in hemolysin export. Transmembrane domains (TMD) form a pore in the inner membrane and the ATP-binding domain (NBD) is responsible for energy generation. The chain is Alpha-hemolysin translocation ATP-binding protein HlyB (hlyB) from Escherichia coli.